Consider the following 313-residue polypeptide: DNA-directed RNA polymerase subunit alpha (313 aa).

The interval 1–229 is alpha N-terminal domain (alpha-NTD); sequence MNSSNLLMEC…NLFKSIGEQK (229 aa). Residues 243-313 form an alpha C-terminal domain (alpha-CTD) region; sequence IKPIDPYTHI…LKNKLGIVLK (71 aa).

This sequence belongs to the RNA polymerase alpha chain family. In terms of assembly, in plastids the minimal PEP RNA polymerase catalytic core is composed of four subunits: alpha, beta, beta', and beta''. When a (nuclear-encoded) sigma factor is associated with the core the holoenzyme is formed, which can initiate transcription.

The protein localises to the plastid. Its subcellular location is the chloroplast. It carries out the reaction RNA(n) + a ribonucleoside 5'-triphosphate = RNA(n+1) + diphosphate. Functionally, DNA-dependent RNA polymerase catalyzes the transcription of DNA into RNA using the four ribonucleoside triphosphates as substrates. The protein is DNA-directed RNA polymerase subunit alpha of Thalassiosira pseudonana (Marine diatom).